The chain runs to 52 residues: Insulin (52 aa).

3 disulfide bridges follow: cysteine 7-cysteine 38, cysteine 19-cysteine 51, and cysteine 37-cysteine 42.

It belongs to the insulin family. As to quaternary structure, heterodimer of a B chain and an A chain linked by two disulfide bonds.

The protein resides in the secreted. In terms of biological role, insulin decreases blood glucose concentration. It increases cell permeability to monosaccharides, amino acids and fatty acids. It accelerates glycolysis, the pentose phosphate cycle, and glycogen synthesis in liver. This Polypterus senegalus (Senegal bichir) protein is Insulin (ins).